The primary structure comprises 249 residues: DNA polymerase sliding clamp (249 aa).

Belongs to the PCNA family. As to quaternary structure, homotrimer. The subunits circularize to form a toroid; DNA passes through its center. Replication factor C (RFC) is required to load the toroid on the DNA.

Functionally, sliding clamp subunit that acts as a moving platform for DNA processing. Responsible for tethering the catalytic subunit of DNA polymerase and other proteins to DNA during high-speed replication. This Pyrococcus horikoshii (strain ATCC 700860 / DSM 12428 / JCM 9974 / NBRC 100139 / OT-3) protein is DNA polymerase sliding clamp.